Reading from the N-terminus, the 3748-residue chain is Intermembrane lipid transfer protein VPS13C (3748 aa).

A Chorein N-terminal domain is found at 3–115 (LESVVADLLN…SLQDIKQKEL (113 aa)). Ser-132 bears the Phosphoserine mark. Phosphothreonine is present on Thr-613. Ser-618 bears the Phosphoserine mark. Thr-623 carries the post-translational modification Phosphothreonine. 4 positions are modified to phosphoserine: Ser-736, Ser-841, Ser-871, and Ser-873. Positions 876-882 (EFFDAED) match the FFAT motif. The residue at position 1968 (Thr-1968) is a Phosphothreonine. A phosphoserine mark is found at Ser-1974 and Ser-2442. A required for late endosome/lysosome localization region spans residues 2410 to 3304 (DYSLKDRAPF…IQQDIDALNT (895 aa)). One can recognise an SHR-BD domain in the interval 2760–3012 (ELSVFSPYWL…LFAWADPTGI (253 aa)). A required for lipid droplet localization region spans residues 3305 to 3748 (ELMESSMTDM…VKLLRPQGPS (444 aa)). Omega-N-methylarginine occurs at positions 3514 and 3521. Lys-3533 carries the N6-acetyllysine modification.

Belongs to the VPS13 family.

The protein resides in the mitochondrion outer membrane. It localises to the lipid droplet. The protein localises to the endoplasmic reticulum membrane. Its subcellular location is the lysosome membrane. It is found in the late endosome membrane. Functionally, mediates the transfer of lipids between membranes at organelle contact sites. Necessary for proper mitochondrial function and maintenance of mitochondrial transmembrane potential. Involved in the regulation of PINK1/PRKN-mediated mitophagy in response to mitochondrial depolarization. The sequence is that of Intermembrane lipid transfer protein VPS13C from Mus musculus (Mouse).